A 734-amino-acid polypeptide reads, in one-letter code: Photosystem I P700 chlorophyll a apoprotein A2 (734 aa).

8 helical membrane passes run 46 to 69 (IFASHFGQLAIIFLWTSGNLFHVA), 135 to 158 (LYTGALFLLFLSAISLIAGRFHLQ), 175 to 199 (LDHHLSGLFGVSSLAWTGHLVHVAI), 273 to 291 (IAHHHLAIAFVFFIAGHMY), 330 to 353 (LHFQLGLALASLGVITSLVAQHMY), 369 to 395 (AALYTHHQYIAGFIMTGAFAHGAIFFI), 417 to 439 (AIISHLSWASLFLGFHTLGLYVH), and 517 to 535 (FLVHHAIALGLHTTTLILV). Residues Cys559 and Cys568 each coordinate [4Fe-4S] cluster. 2 consecutive transmembrane segments (helical) span residues 575 to 596 (AFYLAVFWMLNTIGWVTFYWHW) and 643 to 665 (LSVWAWMFLFGHLVWATGFMFLI). Residues His654, Met662, and Tyr670 each contribute to the chlorophyll a site. Residue Trp671 participates in phylloquinone binding. Residues 707 to 727 (LVGLAHFSVGYIFTYAAFLIA) form a helical membrane-spanning segment.

Belongs to the PsaA/PsaB family. In terms of assembly, the PsaA/B heterodimer binds the P700 chlorophyll special pair and subsequent electron acceptors. PSI consists of a core antenna complex that captures photons, and an electron transfer chain that converts photonic excitation into a charge separation. The eukaryotic PSI reaction center is composed of at least 11 subunits. It depends on P700 is a chlorophyll a/chlorophyll a' dimer, A0 is one or more chlorophyll a, A1 is one or both phylloquinones and FX is a shared 4Fe-4S iron-sulfur center. as a cofactor.

It localises to the plastid. Its subcellular location is the chloroplast thylakoid membrane. The enzyme catalyses reduced [plastocyanin] + hnu + oxidized [2Fe-2S]-[ferredoxin] = oxidized [plastocyanin] + reduced [2Fe-2S]-[ferredoxin]. Functionally, psaA and PsaB bind P700, the primary electron donor of photosystem I (PSI), as well as the electron acceptors A0, A1 and FX. PSI is a plastocyanin-ferredoxin oxidoreductase, converting photonic excitation into a charge separation, which transfers an electron from the donor P700 chlorophyll pair to the spectroscopically characterized acceptors A0, A1, FX, FA and FB in turn. Oxidized P700 is reduced on the lumenal side of the thylakoid membrane by plastocyanin. This chain is Photosystem I P700 chlorophyll a apoprotein A2, found in Cycas taitungensis (Prince sago).